The sequence spans 174 residues: RNA pyrophosphohydrolase (174 aa).

The 144-residue stretch at 6 to 149 (GFRANVGIII…KRDVYRKVMK (144 aa)) folds into the Nudix hydrolase domain. A Nudix box motif is present at residues 38–59 (GGVDEGESAEQAMYRELYEEVG).

It belongs to the Nudix hydrolase family. RppH subfamily. A divalent metal cation is required as a cofactor.

Functionally, accelerates the degradation of transcripts by removing pyrophosphate from the 5'-end of triphosphorylated RNA, leading to a more labile monophosphorylated state that can stimulate subsequent ribonuclease cleavage. In Shewanella loihica (strain ATCC BAA-1088 / PV-4), this protein is RNA pyrophosphohydrolase.